We begin with the raw amino-acid sequence, 62 residues long: Sperm protamine P1 (62 aa).

The segment at 1-62 is disordered; that stretch reads MARYRHSRSR…RYSRRRRRRY (62 aa).

Belongs to the protamine P1 family. Testis.

It localises to the nucleus. The protein localises to the chromosome. Functionally, protamines substitute for histones in the chromatin of sperm during the haploid phase of spermatogenesis. They compact sperm DNA into a highly condensed, stable and inactive complex. The polypeptide is Sperm protamine P1 (PRM1) (Dorcopsulus vanheurni (Lesser forest wallaby)).